The following is a 416-amino-acid chain: MTIHSLEDLPAEGVSGRGVLVRSDLNVPLDENGVITDAGRITASVPTLKALLDGGAKVVVAAHLGRPKDGPDPKLSLEPVAAALGEQLGRHVQLAGDIVGTDALARAEGLTDGDVLLLENIRFDKRETSKDDGERLAFAKQLAELVSPEGAFVSDGFGVVHRKQASVYDVATLLPHYAGRLVADEIRVLEQLTSSTERPYAVVLGGSKVSDKLGVIESLATKADSIVIGGGMCFTFLAAQGYSVGTSLLEKEMIDTCRRLLDTYHDVLRLPVDVVVTEKFAADPPPQTVAADAIPADTMGLDIGPGSVKRFAALLSNAKTIFWNGPMGVFEFPAYATGTRGIAEAIVAATGKGAFSVVGGGDSAAAVRALGISEGSFSHISTGGGASLEYLEGKTLPGIEVLGRPQPGQTEGGGPA.

Substrate contacts are provided by residues 24 to 26 (DLN), Arg40, 63 to 66 (HLGR), Arg122, and Arg162. ATP contacts are provided by residues Lys212, Gly300, Glu331, and 360–363 (GGDS).

The protein belongs to the phosphoglycerate kinase family. In terms of assembly, monomer.

It is found in the cytoplasm. The catalysed reaction is (2R)-3-phosphoglycerate + ATP = (2R)-3-phospho-glyceroyl phosphate + ADP. The protein operates within carbohydrate degradation; glycolysis; pyruvate from D-glyceraldehyde 3-phosphate: step 2/5. The sequence is that of Phosphoglycerate kinase from Mycobacterium ulcerans (strain Agy99).